The following is a 294-amino-acid chain: Cyclin-dependent kinase A-1 (294 aa).

One can recognise a Protein kinase domain in the interval 4–287 (YEKEEKIGEG…ARQALEHEYF (284 aa)). Residues 10–18 (IGEGTYGVV) and lysine 33 each bind ATP. Threonine 14 carries the post-translational modification Phosphothreonine. The residue at position 15 (tyrosine 15) is a Phosphotyrosine. The active-site Proton acceptor is aspartate 127. Threonine 161 carries the phosphothreonine; by CAK modification.

The protein belongs to the protein kinase superfamily. CMGC Ser/Thr protein kinase family. CDC2/CDKX subfamily. Phosphorylated at Thr-161 by CDKD-1. Expressed in the dividing region of the root apex and in differentiated cells such as those in the sclerenchyma, pericycle and parenchyma of the central cylinder.

The catalysed reaction is L-seryl-[protein] + ATP = O-phospho-L-seryl-[protein] + ADP + H(+). It catalyses the reaction L-threonyl-[protein] + ATP = O-phospho-L-threonyl-[protein] + ADP + H(+). It carries out the reaction [DNA-directed RNA polymerase] + ATP = phospho-[DNA-directed RNA polymerase] + ADP + H(+). This is Cyclin-dependent kinase A-1 (CDKA-1) from Oryza sativa subsp. japonica (Rice).